The following is a 412-amino-acid chain: Multifunctional CCA protein (412 aa).

ATP-binding residues include G8 and R11. The CTP site is built by G8 and R11. The Mg(2+) site is built by D21 and D23. 3 residues coordinate ATP: R91, R137, and R140. CTP contacts are provided by R91, R137, and R140. Positions 228 to 329 constitute an HD domain; sequence TGIHTLMTLS…VKLFDSIDAW (102 aa).

It belongs to the tRNA nucleotidyltransferase/poly(A) polymerase family. Bacterial CCA-adding enzyme type 1 subfamily. In terms of assembly, monomer. Can also form homodimers and oligomers. The cofactor is Mg(2+). It depends on Ni(2+) as a cofactor.

The catalysed reaction is a tRNA precursor + 2 CTP + ATP = a tRNA with a 3' CCA end + 3 diphosphate. The enzyme catalyses a tRNA with a 3' CCA end + 2 CTP + ATP = a tRNA with a 3' CCACCA end + 3 diphosphate. Catalyzes the addition and repair of the essential 3'-terminal CCA sequence in tRNAs without using a nucleic acid template. Adds these three nucleotides in the order of C, C, and A to the tRNA nucleotide-73, using CTP and ATP as substrates and producing inorganic pyrophosphate. tRNA 3'-terminal CCA addition is required both for tRNA processing and repair. Also involved in tRNA surveillance by mediating tandem CCA addition to generate a CCACCA at the 3' terminus of unstable tRNAs. While stable tRNAs receive only 3'-terminal CCA, unstable tRNAs are marked with CCACCA and rapidly degraded. The polypeptide is Multifunctional CCA protein (Escherichia coli O6:K15:H31 (strain 536 / UPEC)).